A 938-amino-acid polypeptide reads, in one-letter code: Protein translocase subunit SecA (938 aa).

ATP contacts are provided by residues Gln-90, 108–112, and Asp-504; that span reads GEGKT.

It belongs to the SecA family. In terms of assembly, monomer and homodimer. Part of the essential Sec protein translocation apparatus which comprises SecA, SecYEG and auxiliary proteins SecDF. Other proteins may also be involved.

It is found in the cell inner membrane. The protein resides in the cellular thylakoid membrane. It localises to the cytoplasm. The catalysed reaction is ATP + H2O + cellular proteinSide 1 = ADP + phosphate + cellular proteinSide 2.. Its function is as follows. Part of the Sec protein translocase complex. Interacts with the SecYEG preprotein conducting channel. Has a central role in coupling the hydrolysis of ATP to the transfer of proteins into and across the cell membrane, serving as an ATP-driven molecular motor driving the stepwise translocation of polypeptide chains across the membrane. Functionally, probably participates in protein translocation into and across both the cytoplasmic and thylakoid membranes in cyanobacterial cells. The sequence is that of Protein translocase subunit SecA from Picosynechococcus sp. (strain ATCC 27264 / PCC 7002 / PR-6) (Agmenellum quadruplicatum).